Reading from the N-terminus, the 316-residue chain is 4-hydroxy-3-methylbut-2-enyl diphosphate reductase (316 aa).

Position 12 (cysteine 12) interacts with [4Fe-4S] cluster. (2E)-4-hydroxy-3-methylbut-2-enyl diphosphate-binding residues include histidine 41 and histidine 74. Positions 41 and 74 each coordinate dimethylallyl diphosphate. Positions 41 and 74 each coordinate isopentenyl diphosphate. Cysteine 96 provides a ligand contact to [4Fe-4S] cluster. (2E)-4-hydroxy-3-methylbut-2-enyl diphosphate is bound at residue histidine 124. Histidine 124 provides a ligand contact to dimethylallyl diphosphate. Position 124 (histidine 124) interacts with isopentenyl diphosphate. Catalysis depends on glutamate 126, which acts as the Proton donor. Residue threonine 167 coordinates (2E)-4-hydroxy-3-methylbut-2-enyl diphosphate. A [4Fe-4S] cluster-binding site is contributed by cysteine 197. (2E)-4-hydroxy-3-methylbut-2-enyl diphosphate is bound by residues serine 225, serine 226, asparagine 227, and serine 269. 4 residues coordinate dimethylallyl diphosphate: serine 225, serine 226, asparagine 227, and serine 269. Positions 225, 226, 227, and 269 each coordinate isopentenyl diphosphate.

The protein belongs to the IspH family. Homodimer. [4Fe-4S] cluster serves as cofactor.

The catalysed reaction is isopentenyl diphosphate + 2 oxidized [2Fe-2S]-[ferredoxin] + H2O = (2E)-4-hydroxy-3-methylbut-2-enyl diphosphate + 2 reduced [2Fe-2S]-[ferredoxin] + 2 H(+). It carries out the reaction dimethylallyl diphosphate + 2 oxidized [2Fe-2S]-[ferredoxin] + H2O = (2E)-4-hydroxy-3-methylbut-2-enyl diphosphate + 2 reduced [2Fe-2S]-[ferredoxin] + 2 H(+). It participates in isoprenoid biosynthesis; dimethylallyl diphosphate biosynthesis; dimethylallyl diphosphate from (2E)-4-hydroxy-3-methylbutenyl diphosphate: step 1/1. Its pathway is isoprenoid biosynthesis; isopentenyl diphosphate biosynthesis via DXP pathway; isopentenyl diphosphate from 1-deoxy-D-xylulose 5-phosphate: step 6/6. In terms of biological role, catalyzes the conversion of 1-hydroxy-2-methyl-2-(E)-butenyl 4-diphosphate (HMBPP) into a mixture of isopentenyl diphosphate (IPP) and dimethylallyl diphosphate (DMAPP). Acts in the terminal step of the DOXP/MEP pathway for isoprenoid precursor biosynthesis. The protein is 4-hydroxy-3-methylbut-2-enyl diphosphate reductase of Escherichia coli O6:H1 (strain CFT073 / ATCC 700928 / UPEC).